Here is a 289-residue protein sequence, read N- to C-terminus: Protease HtpX homolog (289 aa).

2 helical membrane passes run 11 to 31 (AALF…IGAG) and 36 to 54 (APIW…YGYW). H138 is a binding site for Zn(2+). E139 is a catalytic residue. H142 is a binding site for Zn(2+). 2 helical membrane-spanning segments follow: residues 153–173 (VAAA…FFGG) and 182–202 (LAMI…QMAI). E207 is a binding site for Zn(2+).

This sequence belongs to the peptidase M48B family. Requires Zn(2+) as cofactor.

The protein resides in the cell membrane. The protein is Protease HtpX homolog of Pseudarthrobacter chlorophenolicus (strain ATCC 700700 / DSM 12829 / CIP 107037 / JCM 12360 / KCTC 9906 / NCIMB 13794 / A6) (Arthrobacter chlorophenolicus).